Reading from the N-terminus, the 556-residue chain is Formate--tetrahydrofolate ligase (556 aa).

65–72 contributes to the ATP binding site; the sequence is TPAGEGKS.

It belongs to the formate--tetrahydrofolate ligase family.

The enzyme catalyses (6S)-5,6,7,8-tetrahydrofolate + formate + ATP = (6R)-10-formyltetrahydrofolate + ADP + phosphate. It participates in one-carbon metabolism; tetrahydrofolate interconversion. The sequence is that of Formate--tetrahydrofolate ligase from Streptococcus equi subsp. zooepidemicus (strain MGCS10565).